A 45-amino-acid polypeptide reads, in one-letter code: MAYKCARCKRTVEVDYEYAGVRCPYCGHRILMKERPTTVKRMKAI.

Positions 8, 23, and 26 each coordinate Zn(2+).

Belongs to the archaeal Rpo12/eukaryotic RPC10 RNA polymerase subunit family. In terms of assembly, part of the RNA polymerase complex. It depends on Zn(2+) as a cofactor.

It is found in the cytoplasm. The catalysed reaction is RNA(n) + a ribonucleoside 5'-triphosphate = RNA(n+1) + diphosphate. In terms of biological role, DNA-dependent RNA polymerase (RNAP) catalyzes the transcription of DNA into RNA using the four ribonucleoside triphosphates as substrates. This is DNA-directed RNA polymerase subunit Rpo12 from Methanothrix thermoacetophila (strain DSM 6194 / JCM 14653 / NBRC 101360 / PT) (Methanosaeta thermophila).